Reading from the N-terminus, the 687-residue chain is Immune inhibitor A (687 aa).

Basic and acidic residues predominate over residues 1–12 (MKDAKADTKEKL). The or 32 signal peptide spans 1–25 (MKDAKADTKEKLNQPATGTPAATGP). A disordered region spans residues 1-43 (MKDAKADTKEKLNQPATGTPAATGPVKGGLNGKVPTSPAKQKA). The propeptide occupies 26–40 (VKGGLNGKVPTSPAK). Zn(2+) is bound at residue H266. Residue E267 is part of the active site. H270 is a binding site for Zn(2+).

The protein belongs to the peptidase M6 family. It depends on Zn(2+) as a cofactor. Ca(2+) serves as cofactor.

It localises to the secreted. In terms of biological role, neutral metalloprotease that is secreted to degrade antibacterial proteins produced by the insect host for its defense (attacins and cecropins). Probably degrades some unknown crucial protein(s) too, since it is toxic when injected to insect larvae. This Bacillus thuringiensis subsp. alesti protein is Immune inhibitor A (ina).